A 614-amino-acid polypeptide reads, in one-letter code: Vitamin B12 transporter BtuB (614 aa).

Residues 1–20 (MIKKASLLTACSVTAFSAWA) form the signal peptide. A TonB box motif is present at residues 26–33 (DTLVVTAN). The TBDR plug domain occupies 38–152 (PRSTVLAPTT…IGGVVNIITT (115 aa)). Residues Leu-83, Ser-85, Asn-92, and 110 to 111 (GS) each bind cyanocob(III)alamin. Positions 155–614 (EPGTEISAGW…EYTLSGSYTF (460 aa)) constitute a TBDR beta-barrel domain. 3 beta stranded membrane-spanning segments follow: residues 158 to 165 (TEISAGWG), 169 to 178 (YQNYDVSTQQ), and 184 to 195 (TRVTLLGDYAHT). Asp-199, Gln-211, Asp-213, and Asp-215 together coordinate Ca(2+). The next 2 membrane-spanning stretches (beta stranded) occupy residues 217-227 (FLSKTLYGALE) and 232-248 (DAWSGFVRGYGYDNRTN). Residues Tyr-249 and Asp-250 each coordinate Ca(2+). Residue Ala-251 coordinates cyanocob(III)alamin. Asp-261 lines the Ca(2+) pocket. 14 beta stranded membrane passes run 263–277 (RKLYSQSWDAGLRYN), 279–296 (ELIKSQLITSYSHSKDYN), 309–325 (TLDEMKQYTVQWANNII), 328–337 (HGNVGAGVDW), 353–369 (YDQRNTGIYLTGLQQVG), 371–381 (FTFEGAARSDD), 385–400 (FGRHGTWQTSAGWEFI), 403–417 (YRFIASYGTSYKAPN), 434–443 (KSKQWEGAFE), 449–458 (VNWRISGYRN), 473–490 (YYNEGKARIKGVEATANF), 494–509 (PLTHTVSYDYVDARNA), 517–529 (RRAKQQVKYQLDW), and 535–550 (DWGITYQYLGTRYDKD). Residue Thr-309 coordinates cyanocob(III)alamin. Arg-517 is a binding site for cyanocob(III)alamin. Tyr-551 provides a ligand contact to cyanocob(III)alamin. The next 3 membrane-spanning stretches (beta stranded) occupy residues 558–572 (TVKMGGVSLWDLAVA), 585–596 (IANLFDKDYETV), and 602–614 (AGREYTLSGSYTF). Residues 597-614 (YGYQTAGREYTLSGSYTF) carry the TonB C-terminal box motif.

The protein belongs to the TonB-dependent receptor family. BtuB (TC 1.B.14.3.1) subfamily.

Its subcellular location is the cell outer membrane. Its function is as follows. Involved in the active translocation of vitamin B12 (cyanocobalamin) across the outer membrane to the periplasmic space. It derives its energy for transport by interacting with the trans-periplasmic membrane protein TonB. This chain is Vitamin B12 transporter BtuB, found in Escherichia coli O157:H7.